The sequence spans 465 residues: L-cystine uptake protein TcyP (465 aa).

The next 10 helical transmembrane spans lie at 3-23 (LFLT…LFYM), 34-54 (VLLA…FFAP), 73-93 (YVRF…LSAF), 105-125 (ISAL…AIGI), 184-204 (PTSA…YLGV), 224-246 (AIIM…AIMT), 263-283 (FVLA…IILA), 338-358 (LSIG…VMIA), 370-390 (FILL…GVGG), and 394-414 (FAAI…GLLI).

It belongs to the dicarboxylate/amino acid:cation symporter (DAACS) (TC 2.A.23) family.

It is found in the membrane. Its function is as follows. Mediates uptake of L-cystine, the oxidized form of L-cysteine. The chain is L-cystine uptake protein TcyP from Shouchella clausii (strain KSM-K16) (Alkalihalobacillus clausii).